We begin with the raw amino-acid sequence, 156 residues long: tRNA (cytidine(34)-2'-O)-methyltransferase (156 aa).

S-adenosyl-L-methionine contacts are provided by glycine 102, leucine 124, and serine 132.

It belongs to the class IV-like SAM-binding methyltransferase superfamily. RNA methyltransferase TrmH family. TrmL subfamily. In terms of assembly, homodimer.

The protein localises to the cytoplasm. The catalysed reaction is cytidine(34) in tRNA + S-adenosyl-L-methionine = 2'-O-methylcytidine(34) in tRNA + S-adenosyl-L-homocysteine + H(+). It catalyses the reaction 5-carboxymethylaminomethyluridine(34) in tRNA(Leu) + S-adenosyl-L-methionine = 5-carboxymethylaminomethyl-2'-O-methyluridine(34) in tRNA(Leu) + S-adenosyl-L-homocysteine + H(+). Functionally, methylates the ribose at the nucleotide 34 wobble position in the two leucyl isoacceptors tRNA(Leu)(CmAA) and tRNA(Leu)(cmnm5UmAA). Catalyzes the methyl transfer from S-adenosyl-L-methionine to the 2'-OH of the wobble nucleotide. This Burkholderia ambifaria (strain ATCC BAA-244 / DSM 16087 / CCUG 44356 / LMG 19182 / AMMD) (Burkholderia cepacia (strain AMMD)) protein is tRNA (cytidine(34)-2'-O)-methyltransferase.